Here is a 464-residue protein sequence, read N- to C-terminus: Na(+)/H(+) antiporter NhaA (464 aa).

The next 12 membrane-spanning stretches (helical) occupy residues 37-57, 82-102, 118-138, 145-165, 176-196, 200-220, 226-246, 248-268, 321-341, 360-380, 396-416, and 430-450; these read GSGI…NTSC, IHYW…GLEI, VLPI…YFSF, VSGW…ILLL, AVLV…IAIF, NLAW…LLLN, ALWA…FSGV, ATVA…YSPT, ILNT…NAGV, VFFG…MICV, VLGI…VSEL, and ITIL…LRFI.

This sequence belongs to the NhaA Na(+)/H(+) (TC 2.A.33) antiporter family.

It localises to the cell inner membrane. It carries out the reaction Na(+)(in) + 2 H(+)(out) = Na(+)(out) + 2 H(+)(in). Na(+)/H(+) antiporter that extrudes sodium in exchange for external protons. This Dichelobacter nodosus (strain VCS1703A) protein is Na(+)/H(+) antiporter NhaA.